The following is a 334-amino-acid chain: Zinc-finger homeodomain protein 10 (334 aa).

The segment covering 1–15 has biased composition (low complexity); that stretch reads MMDMTPTITTTTTPT. Disordered stretches follow at residues 1-33 and 103-164; these read MMDMTPTITTTTTPTPKSPEPESETPTRIQPAK and FHRR…LLSL. The segment at 56 to 107 adopts a ZF-HD dimerization-type; degenerate zinc-finger fold; the sequence is YKECLKNHAAALGGHALDGCGEFMPSPSSISSDPTSLKCAACGCHRNFHRRD. Residues 136–155 show a composition bias toward pro residues; that stretch reads PPPPPPPPPRSPNSASPPPI. Positions 200 to 263 form a DNA-binding region, homeobox; the sequence is RKRFRTKFSQ…NNKNTFNRRD (64 aa). Positions 292–334 are disordered; sequence NGHHGVGGGGELHQSVSSGGGGGGFDSDSGGANGGNVNGSSSS. A compositionally biased stretch (gly residues) spans 309–328; that stretch reads SGGGGGGFDSDSGGANGGNV.

In terms of assembly, homo- and heterodimer with other ZFHD proteins. Interacts with MIF1, MIF2 and MIF3; these interactions prevent nuclear localization and DNA-binding to inhibit transcription regulation activity. Binds to ZHD1, ZHD2, ZHD4, ZHD5, ZHD6, ZHD7 and ZHD8. Interacts with KIN10 and KIN11. As to expression, mostly expressed in rosettes (e.g. young leaves), flowers (e.g. styles), siliques and inflorescence.

The protein localises to the nucleus. Putative transcription factor. Probably involved in establishing polarity during leaf development through the gibberellic acid (GA) signaling pathway. The chain is Zinc-finger homeodomain protein 10 (ZHD10) from Arabidopsis thaliana (Mouse-ear cress).